Consider the following 101-residue polypeptide: ATP-dependent Clp protease adapter protein ClpS (101 aa).

This sequence belongs to the ClpS family. As to quaternary structure, binds to the N-terminal domain of the chaperone ClpA.

Its function is as follows. Involved in the modulation of the specificity of the ClpAP-mediated ATP-dependent protein degradation. The sequence is that of ATP-dependent Clp protease adapter protein ClpS from Corynebacterium jeikeium (strain K411).